A 380-amino-acid chain; its full sequence is Interleukin-13 receptor subunit alpha-2 (380 aa).

Positions 1 to 26 are cleaved as a signal peptide; the sequence is MAFVCLAIGCLYTFLISTTFGCTSSS. At 27–343 the chain is on the extracellular side; that stretch reads DTEIKVNPPQ…EDLSKKTLLR (317 aa). Fibronectin type-III domains lie at 34 to 134, 139 to 235, and 240 to 333; these read PPQD…SPQG, KVQD…LQNI, and PPVY…CWEG. Residues Cys65 and Cys113 are joined by a disulfide bond. Asn115 carries N-linked (GlcNAc...) asparagine glycosylation. Intrachain disulfides connect Cys145–Cys155 and Cys184–Cys197. N-linked (GlcNAc...) asparagine glycosylation is found at Asn215, Asn290, and Asn299. A disulfide bridge connects residues Cys269 and Cys316. Residues 322-326 carry the WSXWS motif motif; it reads WSEWS. A helical transmembrane segment spans residues 344–363; the sequence is FWLPFGFILILVIFVTGLLL. The Cytoplasmic portion of the chain corresponds to 364 to 380; that stretch reads RKPNTYPKMIPEFFCDT.

Belongs to the type I cytokine receptor family. Type 5 subfamily. As to quaternary structure, interacts with IL4RA. Interacts with high affinity to interleukin-13 (IL13), but not to interleukin-4 (IL4). Post-translationally, cleaved by MMP8 leading to a soluble form that is also able to interact with IL13.

The protein resides in the cell membrane. Cell surface receptor that plays a role in the regulation of IL-13-mediated responses. Functions as a decoy receptor that inhibits IL-13- and IL-4-mediated signal transduction via the JAK-STAT pathway and thereby modulates immune responses and inflammation. Serves as a functional signaling receptor for IL-13 in an alternative pathway involving AP-1 ultimately leading to the production of TGFB1. This is Interleukin-13 receptor subunit alpha-2 (IL13RA2) from Homo sapiens (Human).